Here is a 188-residue protein sequence, read N- to C-terminus: Elongation factor P 1 (188 aa).

Belongs to the elongation factor P family.

It is found in the cytoplasm. It functions in the pathway protein biosynthesis; polypeptide chain elongation. In terms of biological role, involved in peptide bond synthesis. Stimulates efficient translation and peptide-bond synthesis on native or reconstituted 70S ribosomes in vitro. Probably functions indirectly by altering the affinity of the ribosome for aminoacyl-tRNA, thus increasing their reactivity as acceptors for peptidyl transferase. This Mesorhizobium japonicum (strain LMG 29417 / CECT 9101 / MAFF 303099) (Mesorhizobium loti (strain MAFF 303099)) protein is Elongation factor P 1.